Here is a 787-residue protein sequence, read N- to C-terminus: Endonuclease MutS2 (787 aa).

An ATP-binding site is contributed by 329–336; sequence GPNTGGKT. The Smr domain maps to 712–787; the sequence is INLLGCTVDE…DAGVTIVDFK (76 aa).

This sequence belongs to the DNA mismatch repair MutS family. MutS2 subfamily. Homodimer. Binds to stalled ribosomes, contacting rRNA.

Functionally, endonuclease that is involved in the suppression of homologous recombination and thus may have a key role in the control of bacterial genetic diversity. Acts as a ribosome collision sensor, splitting the ribosome into its 2 subunits. Detects stalled/collided 70S ribosomes which it binds and splits by an ATP-hydrolysis driven conformational change. Acts upstream of the ribosome quality control system (RQC), a ribosome-associated complex that mediates the extraction of incompletely synthesized nascent chains from stalled ribosomes and their subsequent degradation. Probably generates substrates for RQC. This is Endonuclease MutS2 from Lachnospira eligens (strain ATCC 27750 / DSM 3376 / VPI C15-48 / C15-B4) (Eubacterium eligens).